Consider the following 468-residue polypeptide: Intramembrane protease 2 (468 aa).

Residues M1 to E22 lie on the Lumenal side of the membrane. N-linked (GlcNAc...) asparagine glycosylation is present at N14. Residues Q23–I43 traverse the membrane as a helical segment. Over R44–K70 the chain is Cytoplasmic. A helical membrane pass occupies residues F71–E91. At R92–E168 the chain is on the lumenal side. Residues N114 and N123 are each glycosylated (N-linked (GlcNAc...) asparagine). A helical transmembrane segment spans residues C169–L189. The Cytoplasmic segment spans residues K190–R247. Residues Y248 to L265 traverse the membrane as a helical segment. The Lumenal portion of the chain corresponds to K266–R267. Residues H268–I284 traverse the membrane as a helical segment. Residues E285–S296 lie on the Cytoplasmic side of the membrane. The chain crosses the membrane as a helical span at residues L297–T317. The active site involves D306. Topologically, residues S318–A343 are lumenal. A helical transmembrane segment spans residues S344–L364. Residue D353 is part of the active site. Topologically, residues R365–R388 are cytoplasmic. The helical transmembrane segment at Y389–M409 threads the bilayer. The Lumenal portion of the chain corresponds to H410–A415. A helical membrane pass occupies residues Q416–I436. The PAL motif lies at P417 to L419. The Cytoplasmic portion of the chain corresponds to R437–N468.

It belongs to the peptidase A22B family.

Its subcellular location is the membrane. It is found in the endoplasmic reticulum membrane. Functionally, acts as intramembrane protease. In larvae, required for the complete shedding of the cuticle during molting, possibly by regulating cholesterol uptake via lrp-1. Involved in embryonic and larval development. This chain is Intramembrane protease 2, found in Caenorhabditis elegans.